Here is a 253-residue protein sequence, read N- to C-terminus: Trans-aconitate 2-methyltransferase (253 aa).

It belongs to the methyltransferase superfamily. Tam family.

It localises to the cytoplasm. The enzyme catalyses trans-aconitate + S-adenosyl-L-methionine = (E)-3-(methoxycarbonyl)pent-2-enedioate + S-adenosyl-L-homocysteine. Its function is as follows. Catalyzes the S-adenosylmethionine monomethyl esterification of trans-aconitate. The sequence is that of Trans-aconitate 2-methyltransferase from Klebsiella pneumoniae (strain 342).